The following is a 189-amino-acid chain: dTTP/UTP pyrophosphatase (189 aa).

Asp70 serves as the catalytic Proton acceptor. Cysteines 74 and 79 form a disulfide.

This sequence belongs to the Maf family. YhdE subfamily. In terms of assembly, homodimer. It depends on a divalent metal cation as a cofactor.

The protein resides in the cytoplasm. It catalyses the reaction dTTP + H2O = dTMP + diphosphate + H(+). The enzyme catalyses UTP + H2O = UMP + diphosphate + H(+). The catalysed reaction is CTP + H2O = CMP + diphosphate + H(+). It carries out the reaction psi-UTP + H2O = psi-UMP + diphosphate + H(+). It catalyses the reaction 5-methyl-CTP + H2O = 5-methyl-CMP + diphosphate + H(+). The enzyme catalyses 5-methyl-UTP + H2O = 5-methyl-UMP + diphosphate + H(+). Nucleoside triphosphate pyrophosphatase that hydrolyzes dTTP and UTP. Can also hydrolyze CTP and the modified nucleotides pseudo-UTP, 5-methyl-CTP (m(5)CTP) and 5-methyl-UTP (m(5)UTP). May have a dual role in cell division arrest and in preventing the incorporation of modified nucleotides into cellular nucleic acids. The chain is dTTP/UTP pyrophosphatase from Bacillus subtilis (strain 168).